The primary structure comprises 1115 residues: Integrin alpha-PS3 (1115 aa).

An N-terminal signal peptide occupies residues 1 to 24 (MNAESTMFPHIFLALLALISHIEA). Residues 25–1054 (FNFMPRPSRV…PNIISKHQET (1030 aa)) lie on the Extracellular side of the membrane. 7 FG-GAP repeats span residues 39-99 (KHLK…VCSP), 113-174 (SEYT…STPQ), 193-246 (DNGN…VDNP), 278-335 (IPTP…GKSI), 336-397 (HKYH…FNFE), 398-453 (RQIL…GLRD), and 460-522 (DAPS…SESR). Asparagine 46, asparagine 82, and asparagine 166 each carry an N-linked (GlcNAc...) asparagine glycan. Asparagine 438 is a glycosylation site (N-linked (GlcNAc...) asparagine). N-linked (GlcNAc...) asparagine glycosylation is found at asparagine 696, asparagine 845, asparagine 868, and asparagine 964. Residues 1055-1075 (GLPIWIIIVSVIGGLLLLSAI) traverse the membrane as a helical segment. Topologically, residues 1076 to 1115 (SYLLYKFGFFNRTKKDELDRLVQQNPVEPEAENLNSGGNN) are cytoplasmic.

This sequence belongs to the integrin alpha chain family. Heterodimer of an alpha and a beta subunit. The alpha subunit is composed of a heavy and a light chain linked by a disulfide bond. Interacts with mys/beta-PS and Itgbn. Expressed in embryonic and larval hemocytes (at protein level). Expressed in tissues undergoing invagination, tissue movement and morphogenesis such as salivary gland, trachea, midgut endoderm, dorsal vessel, midline of the ventral nerve cord, amnioserosa and the amnioproctodeal invagination. Expressed in the mushroom body neuropil, brain areas that contain mushroom body processes in synaptic contact with other neurons. In egg chambers, expressed in border cells, in stretch cells and in dorsal appendage primordia.

It is found in the apical cell membrane. The protein localises to the lateral cell membrane. It localises to the cytoplasm. In terms of biological role, integrin alpha-PS3/beta-PS is a receptor for laminin. Also binds to wb. Important during embryogenesis for the development of the trachea, dorsal vessel and salivary gland, as well as for dorsal closure. Required for short-term memory processes. Minor involvement in the establishment of the oocyte anterior-posterior length. Plays a role in timely border cell migration during oogenesis, probably mediated by JNK signaling. Integrin alpha-PS3/Itgbn is required for effective phagocytosis of apoptotic cells during embryonic development and for the phagocytic elimination of S.aureus by mediating the binding of S.aureus peptidoglycan to larval hemocytes, which probably activates a signaling pathway involving Rac1 and Rac2. Integrin alpha-PS3/Itgbn also regulates Fak activity during neuromuscular junction (NMJ) growth and is required for its activation in presynapsis of NMJs. Seems to be dispensable for major morphogenetic processes. This is Integrin alpha-PS3 (scb) from Drosophila melanogaster (Fruit fly).